Reading from the N-terminus, the 445-residue chain is Tubulin beta-9 chain (445 aa).

8 residues coordinate GTP: glutamine 11, glutamate 69, serine 138, glycine 142, threonine 143, glycine 144, asparagine 204, and asparagine 226. Glutamate 69 lines the Mg(2+) pocket. The disordered stretch occupies residues 423 to 445 (QQYQDATADDEEYEEEEEYEAEA). A compositionally biased stretch (acidic residues) spans 429–445 (TADDEEYEEEEEYEAEA).

This sequence belongs to the tubulin family. In terms of assembly, dimer of alpha and beta chains. A typical microtubule is a hollow water-filled tube with an outer diameter of 25 nm and an inner diameter of 15 nM. Alpha-beta heterodimers associate head-to-tail to form protofilaments running lengthwise along the microtubule wall with the beta-tubulin subunit facing the microtubule plus end conferring a structural polarity. Microtubules usually have 13 protofilaments but different protofilament numbers can be found in some organisms and specialized cells. It depends on Mg(2+) as a cofactor.

Its subcellular location is the cytoplasm. The protein localises to the cytoskeleton. Its function is as follows. Tubulin is the major constituent of microtubules, a cylinder consisting of laterally associated linear protofilaments composed of alpha- and beta-tubulin heterodimers. Microtubules grow by the addition of GTP-tubulin dimers to the microtubule end, where a stabilizing cap forms. Below the cap, tubulin dimers are in GDP-bound state, owing to GTPase activity of alpha-tubulin. The sequence is that of Tubulin beta-9 chain from Gossypium hirsutum (Upland cotton).